A 363-amino-acid polypeptide reads, in one-letter code: Chorismate synthase (363 aa).

NADP(+) contacts are provided by R48 and R54. FMN is bound by residues 125 to 127 (RSS), 238 to 239 (NA), G278, 293 to 297 (KPTSS), and R319.

It belongs to the chorismate synthase family. In terms of assembly, homotetramer. It depends on FMNH2 as a cofactor.

The catalysed reaction is 5-O-(1-carboxyvinyl)-3-phosphoshikimate = chorismate + phosphate. The protein operates within metabolic intermediate biosynthesis; chorismate biosynthesis; chorismate from D-erythrose 4-phosphate and phosphoenolpyruvate: step 7/7. Catalyzes the anti-1,4-elimination of the C-3 phosphate and the C-6 proR hydrogen from 5-enolpyruvylshikimate-3-phosphate (EPSP) to yield chorismate, which is the branch point compound that serves as the starting substrate for the three terminal pathways of aromatic amino acid biosynthesis. This reaction introduces a second double bond into the aromatic ring system. This Acidithiobacillus ferrooxidans (strain ATCC 23270 / DSM 14882 / CIP 104768 / NCIMB 8455) (Ferrobacillus ferrooxidans (strain ATCC 23270)) protein is Chorismate synthase.